The sequence spans 326 residues: MNSVKIGIDLYGGDNAPSSVVEGALFALKNKFLSPEELVIVGNEISKEDLDKISNLQIVPAKNLVSNETKPTEVLKMKESSMYVGCEMLKNNELNAFVSAGNTGALLSSGTFVAGRLPGIKRPALVLALPSKSNKPKILVDAGANAEVKAEHFYDFAREGIAYAKFLNLENPRVGILNIGSEDEKGNSIVREASNLLKEEKKFNYVGYVEARELFDDTCDIIVTDGFTGNNVLKTMEGTAYFILHELKETIKKGGLFTKLGALFLRGSLKSLVNKIDYRSYGGTFFLGVNGVLVKAHGSSDAEAIANALYVAYRAAKFDLIEKIEI.

It belongs to the PlsX family. In terms of assembly, homodimer. Probably interacts with PlsY.

Its subcellular location is the cytoplasm. The enzyme catalyses a fatty acyl-[ACP] + phosphate = an acyl phosphate + holo-[ACP]. The protein operates within lipid metabolism; phospholipid metabolism. Its function is as follows. Catalyzes the reversible formation of acyl-phosphate (acyl-PO(4)) from acyl-[acyl-carrier-protein] (acyl-ACP). This enzyme utilizes acyl-ACP as fatty acyl donor, but not acyl-CoA. The sequence is that of Phosphate acyltransferase from Petrotoga mobilis (strain DSM 10674 / SJ95).